A 457-amino-acid chain; its full sequence is uncharacterized protein (457 aa).

The TRAM domain maps to 5–63; it reads PVEEGQKFPLTIRRMGINGEGIGYFKKAVVFVPGAITGEEVVVEAVKVRDRFTEAKLNK. The [4Fe-4S] cluster site is built by Cys-76, Cys-82, Cys-85, and Cys-166. The S-adenosyl-L-methionine site is built by Gln-290, Tyr-319, Asp-340, and Asp-388. Cys-415 acts as the Nucleophile in catalysis.

It belongs to the class I-like SAM-binding methyltransferase superfamily. RNA M5U methyltransferase family.

This is an uncharacterized protein from Listeria innocua serovar 6a (strain ATCC BAA-680 / CLIP 11262).